We begin with the raw amino-acid sequence, 89 residues long: Small ribosomal subunit protein uS15 (89 aa).

The protein belongs to the universal ribosomal protein uS15 family. As to quaternary structure, part of the 30S ribosomal subunit. Forms a bridge to the 50S subunit in the 70S ribosome, contacting the 23S rRNA.

In terms of biological role, one of the primary rRNA binding proteins, it binds directly to 16S rRNA where it helps nucleate assembly of the platform of the 30S subunit by binding and bridging several RNA helices of the 16S rRNA. Functionally, forms an intersubunit bridge (bridge B4) with the 23S rRNA of the 50S subunit in the ribosome. This Pseudomonas putida (strain ATCC 700007 / DSM 6899 / JCM 31910 / BCRC 17059 / LMG 24140 / F1) protein is Small ribosomal subunit protein uS15.